Here is a 575-residue protein sequence, read N- to C-terminus: Developmental and secondary metabolism regulator VEL1 (575 aa).

The region spanning 21-225 is the Velvet domain; it reads GRKLKYTLTV…AEQGCRVRIR (205 aa). Positions 35–40 match the Nuclear localization signal motif; that stretch reads ERARAC. Disordered stretches follow at residues 36–56 and 227–402; these read RARACGSGAKSSADRRPVDPP and DVRM…QSYE. Residues 274-284 are compositionally biased toward basic and acidic residues; sequence VHEDPQQRRGS. Residues 294–308 show a composition bias toward polar residues; the sequence is VVNTPFRTPSISPST. Pro residues predominate over residues 334–346; it reads IQPPHPPPPPPSS. 2 stretches are compositionally biased toward polar residues: residues 355-365 and 385-402; these read HHNQGPSTQFR and SYSQFRPPTNPSQQQSYE. The interval 465–509 is PEST; sequence AEQPLAMSPLASVTSISRGTQNSAPMPSHNYNKLERSGSYSQYAP. Residues 513-549 form a disordered region; the sequence is EAPKSTNKRSFNDVFSTPTESLSNGRRPSAIGIDIEE. Residues 516–538 are compositionally biased toward polar residues; sequence KSTNKRSFNDVFSTPTESLSNGR.

It belongs to the velvet family. VeA subfamily. Component of the heterotrimeric velvet complex composed of LAE1, VEL1 and VEL2; VEL1 acting as a bridging protein between LAE1 and VEL2.

The protein localises to the nucleus. The protein resides in the cytoplasm. In terms of biological role, component of the velvet transcription factor complex that controls sexual/asexual developmental ratio in response to light, promoting sexual development in the darkness while stimulating asexual sporulation under illumination. The velvet complex hat acts as a global regulator for secondary metabolite gene expression. Controls the expression of the oxalic acid and melanin gene clusters. Also controls the expression of proteases and carbohydrate-active enzymes. Involved in the resistance to oxidative stress. Required for full virulence. The sequence is that of Developmental and secondary metabolism regulator VEL1 from Botryotinia fuckeliana (strain B05.10) (Noble rot fungus).